We begin with the raw amino-acid sequence, 264 residues long: tRNA pseudouridine synthase A (264 aa).

The Nucleophile role is filled by Asp51. Tyr109 contributes to the substrate binding site.

Belongs to the tRNA pseudouridine synthase TruA family. In terms of assembly, homodimer.

The enzyme catalyses uridine(38/39/40) in tRNA = pseudouridine(38/39/40) in tRNA. Formation of pseudouridine at positions 38, 39 and 40 in the anticodon stem and loop of transfer RNAs. The sequence is that of tRNA pseudouridine synthase A from Polaromonas sp. (strain JS666 / ATCC BAA-500).